The chain runs to 544 residues: Methionine--tRNA ligase (544 aa).

The short motif at 10–20 (PYANGSLHLGH) is the 'HIGH' region element. Cysteine 141, cysteine 144, cysteine 153, and cysteine 156 together coordinate Zn(2+). Residues 329-333 (KLSTS) carry the 'KMSKS' region motif. Threonine 332 contributes to the ATP binding site.

Belongs to the class-I aminoacyl-tRNA synthetase family. MetG type 1 subfamily. As to quaternary structure, monomer. Requires Zn(2+) as cofactor.

It is found in the cytoplasm. It catalyses the reaction tRNA(Met) + L-methionine + ATP = L-methionyl-tRNA(Met) + AMP + diphosphate. Functionally, is required not only for elongation of protein synthesis but also for the initiation of all mRNA translation through initiator tRNA(fMet) aminoacylation. In Bacillus cereus (strain G9842), this protein is Methionine--tRNA ligase.